The primary structure comprises 517 residues: Urethanase (517 aa).

Catalysis depends on charge relay system residues K98 and S173. The active-site Acyl-ester intermediate is the S197.

Belongs to the amidase family. As to quaternary structure, homooctamer.

It carries out the reaction urethane + H2O + H(+) = ethanol + NH4(+) + CO2. Exhibits poor salt tolerance but excellent tolerance to low concentrations of ethanol. EDTA has almost no impact on activity. Activity is increased in the presence of Ca(2+), Mg(2+) and Co(3+) and inhibited in the presence of Al(3+), Zn(2+) and Cu(2+). Its function is as follows. Hydrolase that can catalyze the degradation of ethyl carbamate (also called urethane), a probable human carcinogen widely found in alcoholic beverages. Can also use methyl carbamate, butyl carbamate, acetamide and urea. Also catalyzes the enantioselective hydrolysis of 2-phenylpropionamide, alpha-chlorophenylacetamide, 2-methyl-3-phenylpropionamide and alpha-methoxyphenylacetamide to the corresponding acids. Is inactive on benzamide and L-glutamine. The chain is Urethanase from Rhizobium radiobacter (Agrobacterium tumefaciens).